The following is a 152-amino-acid chain: METPKLSVEAIEKGTVIDHIPAGRGLTILRQFKLLHYGNAVTVGFNLPSKTQGSKDIIKIKGVCLDDKAADRLALFAPEAVVNTIDNFKVVQKRHLNLPDEIAEVFRCPNTNCAGHGEPVKSRFYVKKHNGQTRLKCHYCEKTYSRDSVAEA.

Zn(2+) contacts are provided by C108, C113, C137, and C140.

It belongs to the PyrI family. Contains catalytic and regulatory chains. Zn(2+) is required as a cofactor.

Functionally, involved in allosteric regulation of aspartate carbamoyltransferase. The sequence is that of Aspartate carbamoyltransferase regulatory chain from Neisseria meningitidis serogroup B (strain ATCC BAA-335 / MC58).